A 1296-amino-acid chain; its full sequence is DNA-directed RNA polymerase subunit beta' (1296 aa).

Zn(2+) is bound by residues cysteine 60, cysteine 62, cysteine 75, and cysteine 78. Residues aspartate 535, aspartate 537, and aspartate 539 each contribute to the Mg(2+) site. Zn(2+) contacts are provided by cysteine 877, cysteine 954, cysteine 961, and cysteine 964.

Belongs to the RNA polymerase beta' chain family. The RNAP catalytic core consists of 2 alpha, 1 beta, 1 beta' and 1 omega subunit. When a sigma factor is associated with the core the holoenzyme is formed, which can initiate transcription. The cofactor is Mg(2+). Zn(2+) serves as cofactor.

The enzyme catalyses RNA(n) + a ribonucleoside 5'-triphosphate = RNA(n+1) + diphosphate. Functionally, DNA-dependent RNA polymerase catalyzes the transcription of DNA into RNA using the four ribonucleoside triphosphates as substrates. The chain is DNA-directed RNA polymerase subunit beta' from Beutenbergia cavernae (strain ATCC BAA-8 / DSM 12333 / CCUG 43141 / JCM 11478 / NBRC 16432 / NCIMB 13614 / HKI 0122).